Here is a 305-residue protein sequence, read N- to C-terminus: Nucleotide-binding protein Saro_2904 (305 aa).

15–22 (GLLGAGKT) contributes to the ATP binding site. 68 to 71 (DTRT) provides a ligand contact to GTP.

The protein belongs to the RapZ-like family.

Functionally, displays ATPase and GTPase activities. The protein is Nucleotide-binding protein Saro_2904 of Novosphingobium aromaticivorans (strain ATCC 700278 / DSM 12444 / CCUG 56034 / CIP 105152 / NBRC 16084 / F199).